The primary structure comprises 102 residues: Aspartyl/glutamyl-tRNA(Asn/Gln) amidotransferase subunit C (102 aa).

This sequence belongs to the GatC family. In terms of assembly, heterotrimer of A, B and C subunits.

The catalysed reaction is L-glutamyl-tRNA(Gln) + L-glutamine + ATP + H2O = L-glutaminyl-tRNA(Gln) + L-glutamate + ADP + phosphate + H(+). It carries out the reaction L-aspartyl-tRNA(Asn) + L-glutamine + ATP + H2O = L-asparaginyl-tRNA(Asn) + L-glutamate + ADP + phosphate + 2 H(+). In terms of biological role, allows the formation of correctly charged Asn-tRNA(Asn) or Gln-tRNA(Gln) through the transamidation of misacylated Asp-tRNA(Asn) or Glu-tRNA(Gln) in organisms which lack either or both of asparaginyl-tRNA or glutaminyl-tRNA synthetases. The reaction takes place in the presence of glutamine and ATP through an activated phospho-Asp-tRNA(Asn) or phospho-Glu-tRNA(Gln). The sequence is that of Aspartyl/glutamyl-tRNA(Asn/Gln) amidotransferase subunit C from Bordetella pertussis (strain Tohama I / ATCC BAA-589 / NCTC 13251).